A 105-amino-acid chain; its full sequence is Large ribosomal subunit protein uL24 (105 aa).

Belongs to the universal ribosomal protein uL24 family. As to quaternary structure, part of the 50S ribosomal subunit.

In terms of biological role, one of two assembly initiator proteins, it binds directly to the 5'-end of the 23S rRNA, where it nucleates assembly of the 50S subunit. Functionally, one of the proteins that surrounds the polypeptide exit tunnel on the outside of the subunit. The polypeptide is Large ribosomal subunit protein uL24 (Parvibaculum lavamentivorans (strain DS-1 / DSM 13023 / NCIMB 13966)).